A 423-amino-acid polypeptide reads, in one-letter code: Polyglutamylase complex subunit TTLL1 (423 aa).

In terms of domain architecture, TTL spans 1-367 (MAGRVKWVTD…NGEIPDCKWN (367 aa)). Residues K138, 144–145 (QG), 181–184 (SVYI), and 194–196 (KFD) each bind ATP. An a protein-binding site is contributed by Q144. R220 serves as a coordination point for L-glutamate. 241 to 242 (TN) contacts ATP. K259 contacts L-glutamate. Residues D313, E326, and N328 each contribute to the Mg(2+) site. Residue K344 coordinates L-glutamate. The tract at residues 390 to 423 (DGAERELRNRPGQPVGPRAGRSRDSGRSVLTTWK) is disordered.

Belongs to the tubulin polyglutamylase family. Part of the neuronal tubulin polyglutamylase complex which contains TPGS1, TPGS2, TTLL1, LRRC49 and NICN1. Interacts with PCM1, CSTPP1 and LRRC49. Mg(2+) serves as cofactor. Highly expressed in brain, heart and kidney. Expressed in liver, lung, muscle, spleen, testis and trachea. In the brain, expressed in ependymal cilia, cortex, corpus callosum and striatum. Expressed in blastomere.

The protein resides in the cytoplasm. It localises to the cytoskeleton. The protein localises to the cilium basal body. It is found in the cilium axoneme. Its subcellular location is the cell projection. The protein resides in the cilium. It localises to the flagellum. It carries out the reaction (L-glutamyl)(n)-gamma-L-glutamyl-L-glutamyl-[protein] + L-glutamate + ATP = (L-glutamyl)(n+1)-gamma-L-glutamyl-L-glutamyl-[protein] + ADP + phosphate + H(+). Functionally, catalytic subunit of a polyglutamylase complex which modifies tubulin, generating side chains of glutamate on the gamma-carboxyl group of specific glutamate residues within the C-terminal tail of tubulin. Probably involved in the side-chain elongation step of the polyglutamylation reaction rather than the initiation step. Modifies both alpha- and beta-tubulins with a preference for the alpha-tail. Unlike most polyglutamylases of the tubulin--tyrosine ligase family, only displays a catalytic activity when in complex with other proteins as it is most likely lacking domains important for autonomous activity. Part of the neuronal tubulin polyglutamylase complex. Mediates cilia and flagella polyglutamylation which is essential for their biogenesis and motility. Involved in respiratory motile cilia function through the regulation of beating asymmetry. Essential for sperm flagella biogenesis, motility and male fertility. Also mediates glutamylation of non-tubulin proteins. Involved in KLF4 glutamylation which impedes its ubiquitination, thereby leading to somatic cell reprogramming, pluripotency maintenance and embryogenesis. This is Polyglutamylase complex subunit TTLL1 from Mus musculus (Mouse).